A 1248-amino-acid polypeptide reads, in one-letter code: ATP-dependent helicase/nuclease subunit A (1248 aa).

The region spanning 4-480 (TKWTKEQYAA…ILLFKNFRSR (477 aa)) is the UvrD-like helicase ATP-binding domain. ATP is bound at residue 25 to 32 (AAAGAGKT). Residues 523 to 820 (ETVVGGAIEL…RLMSIHKSKG (298 aa)) form the UvrD-like helicase C-terminal domain.

It belongs to the helicase family. AddA subfamily. As to quaternary structure, heterodimer of AddA and AddB/RexB. Mg(2+) serves as cofactor.

The enzyme catalyses Couples ATP hydrolysis with the unwinding of duplex DNA by translocating in the 3'-5' direction.. It carries out the reaction ATP + H2O = ADP + phosphate + H(+). Functionally, the heterodimer acts as both an ATP-dependent DNA helicase and an ATP-dependent, dual-direction single-stranded exonuclease. Recognizes the chi site generating a DNA molecule suitable for the initiation of homologous recombination. The AddA nuclease domain is required for chi fragment generation; this subunit has the helicase and 3' -&gt; 5' nuclease activities. This chain is ATP-dependent helicase/nuclease subunit A, found in Ruminiclostridium cellulolyticum (strain ATCC 35319 / DSM 5812 / JCM 6584 / H10) (Clostridium cellulolyticum).